Consider the following 162-residue polypeptide: AP-1 complex subunit sigma-2 (162 aa).

The protein belongs to the adaptor complexes small subunit family. In terms of assembly, adaptor protein complex 1 (AP-1) is a heterotetramer composed of two large adaptins (gamma-type subunit and beta-type subunit), a medium adaptin (mu-type subunit) and a small adaptin (sigma-type subunit). As to expression, expressed in roots, stems, leaves, flowers and siliques (developing fruits and seeds).

The protein localises to the golgi apparatus. It is found in the cytoplasmic vesicle. It localises to the clathrin-coated vesicle membrane. In terms of biological role, subunit of clathrin-associated adaptor protein complex 1 that plays a role in protein sorting at the trans-Golgi network and early endosomes (TGN/EE). The AP complexes mediate the recruitment of clathrin to membranes and the recognition of sorting signals within the cytosolic tails of transmembrane cargo molecules. This chain is AP-1 complex subunit sigma-2 (AAP19-2), found in Arabidopsis thaliana (Mouse-ear cress).